The following is a 56-amino-acid chain: Large ribosomal subunit protein bL32 (56 aa).

The tract at residues 1–34 (MAVQQNKPSRSKRGMRRAHDALKTSTISVDKTSG) is disordered.

The protein belongs to the bacterial ribosomal protein bL32 family.

The polypeptide is Large ribosomal subunit protein bL32 (Baumannia cicadellinicola subsp. Homalodisca coagulata).